A 198-amino-acid chain; its full sequence is dTTP/UTP pyrophosphatase (198 aa).

The active-site Proton acceptor is the Asp-75.

It belongs to the Maf family. YhdE subfamily. A divalent metal cation is required as a cofactor.

Its subcellular location is the cytoplasm. It catalyses the reaction dTTP + H2O = dTMP + diphosphate + H(+). It carries out the reaction UTP + H2O = UMP + diphosphate + H(+). Nucleoside triphosphate pyrophosphatase that hydrolyzes dTTP and UTP. May have a dual role in cell division arrest and in preventing the incorporation of modified nucleotides into cellular nucleic acids. This is dTTP/UTP pyrophosphatase from Wolbachia pipientis wMel.